The sequence spans 156 residues: ATP synthase subunit b (156 aa).

The chain crosses the membrane as a helical span at residues Ile-3–Thr-23.

It belongs to the ATPase B chain family. As to quaternary structure, F-type ATPases have 2 components, F(1) - the catalytic core - and F(0) - the membrane proton channel. F(1) has five subunits: alpha(3), beta(3), gamma(1), delta(1), epsilon(1). F(0) has three main subunits: a(1), b(2) and c(10-14). The alpha and beta chains form an alternating ring which encloses part of the gamma chain. F(1) is attached to F(0) by a central stalk formed by the gamma and epsilon chains, while a peripheral stalk is formed by the delta and b chains.

It localises to the cell inner membrane. F(1)F(0) ATP synthase produces ATP from ADP in the presence of a proton or sodium gradient. F-type ATPases consist of two structural domains, F(1) containing the extramembraneous catalytic core and F(0) containing the membrane proton channel, linked together by a central stalk and a peripheral stalk. During catalysis, ATP synthesis in the catalytic domain of F(1) is coupled via a rotary mechanism of the central stalk subunits to proton translocation. Its function is as follows. Component of the F(0) channel, it forms part of the peripheral stalk, linking F(1) to F(0). The polypeptide is ATP synthase subunit b (Xanthomonas campestris pv. campestris (strain 8004)).